Here is a 140-residue protein sequence, read N- to C-terminus: Protein S40-1 (140 aa).

The segment at 16–58 (YFPIRRREDGNEKENNRPVDFRENSERVWNKSSRRSKTTPLPS) is disordered. Residues 20-44 (RRREDGNEKENNRPVDFRENSERVW) are compositionally biased toward basic and acidic residues.

Belongs to the senescence regulator S40 family.

The protein resides in the cytoplasm. The sequence is that of Protein S40-1 from Arabidopsis thaliana (Mouse-ear cress).